A 69-amino-acid chain; its full sequence is DNA gyrase inhibitor YacG (69 aa).

4 residues coordinate Zn(2+): cysteine 7, cysteine 10, cysteine 26, and cysteine 30.

Belongs to the DNA gyrase inhibitor YacG family. As to quaternary structure, interacts with GyrB. It depends on Zn(2+) as a cofactor.

Inhibits all the catalytic activities of DNA gyrase by preventing its interaction with DNA. Acts by binding directly to the C-terminal domain of GyrB, which probably disrupts DNA binding by the gyrase. The chain is DNA gyrase inhibitor YacG from Shewanella baltica (strain OS195).